The primary structure comprises 124 residues: 5-hydroxyisourate hydrolase (124 aa).

The substrate site is built by histidine 15, arginine 53, and tyrosine 121.

This sequence belongs to the transthyretin family. 5-hydroxyisourate hydrolase subfamily. In terms of assembly, homotetramer.

It carries out the reaction 5-hydroxyisourate + H2O = 5-hydroxy-2-oxo-4-ureido-2,5-dihydro-1H-imidazole-5-carboxylate + H(+). Its function is as follows. Catalyzes the hydrolysis of 5-hydroxyisourate (HIU) to 2-oxo-4-hydroxy-4-carboxy-5-ureidoimidazoline (OHCU). This chain is 5-hydroxyisourate hydrolase, found in Mesorhizobium japonicum (strain LMG 29417 / CECT 9101 / MAFF 303099) (Mesorhizobium loti (strain MAFF 303099)).